The primary structure comprises 660 residues: DNA mismatch repair protein MutL (660 aa).

The protein belongs to the DNA mismatch repair MutL/HexB family.

In terms of biological role, this protein is involved in the repair of mismatches in DNA. It is required for dam-dependent methyl-directed DNA mismatch repair. May act as a 'molecular matchmaker', a protein that promotes the formation of a stable complex between two or more DNA-binding proteins in an ATP-dependent manner without itself being part of a final effector complex. The sequence is that of DNA mismatch repair protein MutL from Solibacter usitatus (strain Ellin6076).